The sequence spans 449 residues: MNAALNLWKDAHAKRLSQYCAVRVIGRVSAVRRILLECRIPSAKVGDLCEVSKADGSLLLAEIVGFTQECTLLSALGPPDGIQVGAPIRPLGVAHRIGVDDSLLGCVLDGFGRPLMGDCLGAFAGPEDRRTTLPVIADALPPTQRPRITRALPTGIRAIDSAILLGEGQRVGLFAGAGCGKTTLMAELARNMDCDVIVFGLIGERGRELREFLDHELDETLRRRSVLVCATSDRSSMERARAAFTATAIAEAFRARGQKVLLLLDSLTRFARAQREIGIASGEPLGRGGLPPSVYTLLPRLVERAGMSENGSITALYTVLIEQDSMNDPVADEVRSLLDGHIVLSRKLAERGHYPAIDVSASISRILSNVTGRKHQRANNRLRQLLAAYKQVEMLLRLGEYQAGADPVTDCAVQLNEAINAFLRQDLREPVPLQETLDRLLQLTSQLPE.

178-183 (GCGKTT) is an ATP binding site.

Belongs to the ATPase alpha/beta chains family. T3SS ATPase subfamily. As to quaternary structure, the core secretion machinery of the T3SS is composed of approximately 20 different proteins, including cytoplasmic components, a base, an export apparatus and a needle. This subunit is part of the cytosolic complex. Forms homododecamers.

Its subcellular location is the cytoplasm. The catalysed reaction is ATP + H2O + cellular proteinSide 1 = ADP + phosphate + cellular proteinSide 2.. Its function is as follows. ATPase component of the type III secretion system (T3SS), also called injectisome, which is used to inject bacterial effector proteins into eukaryotic host cells. Acts as a molecular motor to provide the energy that is required for the export of proteins. Required for type III secretion apparatus (T3SA) formation, proper protein secretion, host cell invasion and virulence. May play a critical role in T3SS substrate recognition, disassembly of the effector/chaperone complex and unfolding of the effector in an ATP-dependent manner prior to secretion. The protein is Type 3 secretion system ATPase of Pseudomonas syringae pv. syringae.